An 81-amino-acid chain; its full sequence is Putative snRNP Sm-like protein (81 aa).

The Sm domain occupies 13–81 (RPLDALGNSL…RGDNIVYISP (69 aa)).

It belongs to the snRNP Sm proteins family.

This is Putative snRNP Sm-like protein from Methanothermobacter thermautotrophicus (strain ATCC 29096 / DSM 1053 / JCM 10044 / NBRC 100330 / Delta H) (Methanobacterium thermoautotrophicum).